A 501-amino-acid polypeptide reads, in one-letter code: Cell division control protein 24 (501 aa).

As to quaternary structure, interacts with dna2, pcn1 and rfc1.

It is found in the nucleus. The protein resides in the cytoplasm. Has a role in the progression of DNA replication and in the maintenance of genomic integrity. Acts during S phase, after initiation, where it is essential for completion. The sequence is that of Cell division control protein 24 (cdc24) from Schizosaccharomyces pombe (strain 972 / ATCC 24843) (Fission yeast).